The primary structure comprises 445 residues: 6-phosphogluconate dehydrogenase, decarboxylating (445 aa).

Residues 1–4 (AVMG), 22–24 (NRS), 63–65 (VQA), and N91 each bind NADP(+). Residues N91 and 117–119 (SGG) contribute to the substrate site. The Proton acceptor role is filled by K172. Position 175–176 (175–176 (HN)) interacts with substrate. The Proton donor role is filled by E179. Positions 180, 249, 276, 434, and 440 each coordinate substrate.

Belongs to the 6-phosphogluconate dehydrogenase family. As to quaternary structure, homodimer.

It carries out the reaction 6-phospho-D-gluconate + NADP(+) = D-ribulose 5-phosphate + CO2 + NADPH. It functions in the pathway carbohydrate degradation; pentose phosphate pathway; D-ribulose 5-phosphate from D-glucose 6-phosphate (oxidative stage): step 3/3. Catalyzes the oxidative decarboxylation of 6-phosphogluconate to ribulose 5-phosphate and CO(2), with concomitant reduction of NADP to NADPH. The polypeptide is 6-phosphogluconate dehydrogenase, decarboxylating (gnd) (Pseudescherichia vulneris (Escherichia vulneris)).